A 355-amino-acid chain; its full sequence is Protein-glutamate methylesterase/protein-glutamine glutaminase 3 (355 aa).

The region spanning 8–123 (SVLIVDDSGM…AREVEDFVDK (116 aa)) is the Response regulatory domain. D59 carries the post-translational modification 4-aspartylphosphate. A disordered region spans residues 139-161 (RSAPAAGPTPVPQAPPPPAAPPA). Over residues 145–159 (GPTPVPQAPPPPAAP) the composition is skewed to pro residues. Residues 160–350 (PAGDGGIIAI…ASLLEITGAS (191 aa)) enclose the CheB-type methylesterase domain. Active-site residues include S172, H199, and D292.

It belongs to the CheB family. In terms of processing, phosphorylated by CheA. Phosphorylation of the N-terminal regulatory domain activates the methylesterase activity.

It localises to the cytoplasm. It catalyses the reaction [protein]-L-glutamate 5-O-methyl ester + H2O = L-glutamyl-[protein] + methanol + H(+). The catalysed reaction is L-glutaminyl-[protein] + H2O = L-glutamyl-[protein] + NH4(+). Functionally, involved in chemotaxis. Part of a chemotaxis signal transduction system that modulates chemotaxis in response to various stimuli. Catalyzes the demethylation of specific methylglutamate residues introduced into the chemoreceptors (methyl-accepting chemotaxis proteins or MCP) by CheR. Also mediates the irreversible deamidation of specific glutamine residues to glutamic acid. In Paramagnetospirillum magneticum (strain ATCC 700264 / AMB-1) (Magnetospirillum magneticum), this protein is Protein-glutamate methylesterase/protein-glutamine glutaminase 3.